Here is a 622-residue protein sequence, read N- to C-terminus: Solute carrier family 2, facilitated glucose transporter member 12 (622 aa).

The interval 1-26 (MVPVENTEGPNLLNQKGREAETEGSC) is disordered. Topologically, residues 1 to 44 (MVPVENTEGPNLLNQKGREAETEGSCGASGGGHPACAGGPSMFT) are cytoplasmic. Residues 45–65 (FLTSVTAAISGLLVGYELGLI) form a helical membrane-spanning segment. At 66–84 (SGALLQIRTLLALTCHEQE) the chain is on the extracellular side. The chain crosses the membrane as a helical span at residues 85–105 (MVVSSLLIGAFLASLTGGVLI). Topologically, residues 106 to 111 (DRYGRR) are cytoplasmic. Residues 112–132 (LAIILSSCLLGLGSLVLIMSL) form a helical membrane-spanning segment. At 133–141 (SYTLLIMGR) the chain is on the extracellular side. The chain crosses the membrane as a helical span at residues 142 to 162 (VAIGVSISLSSIATCVYIAEI). The Cytoplasmic segment spans residues 163-168 (APQHRR). The chain crosses the membrane as a helical span at residues 169-189 (GLLVSLNELMIVTGILFAYIS). The Extracellular segment spans residues 190 to 201 (NYAFANISNGWK). Residue Asn-195 is glycosylated (N-linked (GlcNAc...) asparagine). The helical transmembrane segment at 202-222 (YMFGLVIPLGVLQAIAMYFLP) threads the bilayer. The Cytoplasmic portion of the chain corresponds to 223–282 (PSPRFLVMKGQEESAGKVLRKLRVISDTTEELTLIKSSLKDEYQYSFWDLFRSKDNMRTR). The chain crosses the membrane as a helical span at residues 283-303 (ILIGLTLVFFVQTTGQPNILF). At 304-321 (YASTVLKSVGFQSNEAAS) the chain is on the extracellular side. A helical transmembrane segment spans residues 322–342 (LASTGVGVVKVVSTIPATLLV). Residues 343–349 (DHIGSKT) lie on the Cytoplasmic side of the membrane. A helical transmembrane segment spans residues 350-370 (FLCIGSSVMSASLLTMGIVNL). Residues 371–471 (NINMNFTNIC…PAAYKWLSLA (101 aa)) lie on the Extracellular side of the membrane. N-linked (GlcNAc...) asparagine glycosylation is found at Asn-375, Asn-387, Asn-400, and Asn-405. A helical membrane pass occupies residues 472–492 (SLLVYVAAFSIGLGPMPWLVL). Residues 493–503 (SEIFPGGIRGR) lie on the Cytoplasmic side of the membrane. Residues 504–524 (AMALTSSMNWGVNLLISLTFL) traverse the membrane as a helical segment. Topologically, residues 525 to 533 (TVTDLIGLS) are extracellular. Residues 534–554 (WVCFIYTIMSLASLAFVVLFI) form a helical membrane-spanning segment. The Cytoplasmic segment spans residues 555–622 (PETKGCSLEQ…GQSQRPSPDT (68 aa)).

The protein belongs to the major facilitator superfamily. Sugar transporter (TC 2.A.1.1) family. Glucose transporter subfamily. In terms of tissue distribution, expressed in skeletal muscle, heart, brain, kidney, spleen, adipose tissues and to a lesser extent in small intestine and lung.

It is found in the cell membrane. The protein resides in the endomembrane system. Its subcellular location is the cytoplasm. It localises to the perinuclear region. It carries out the reaction D-glucose(out) = D-glucose(in). In terms of biological role, insulin-independent facilitative glucose transporter. The chain is Solute carrier family 2, facilitated glucose transporter member 12 from Mus musculus (Mouse).